We begin with the raw amino-acid sequence, 180 residues long: Crossover junction endodeoxyribonuclease RuvC (180 aa).

Residues Asp9, Glu74, and Asp146 contribute to the active site. Residues Asp9, Glu74, and Asp146 each coordinate Mg(2+).

Belongs to the RuvC family. Homodimer which binds Holliday junction (HJ) DNA. The HJ becomes 2-fold symmetrical on binding to RuvC with unstacked arms; it has a different conformation from HJ DNA in complex with RuvA. In the full resolvosome a probable DNA-RuvA(4)-RuvB(12)-RuvC(2) complex forms which resolves the HJ. It depends on Mg(2+) as a cofactor.

The protein localises to the cytoplasm. The enzyme catalyses Endonucleolytic cleavage at a junction such as a reciprocal single-stranded crossover between two homologous DNA duplexes (Holliday junction).. Its function is as follows. The RuvA-RuvB-RuvC complex processes Holliday junction (HJ) DNA during genetic recombination and DNA repair. Endonuclease that resolves HJ intermediates. Cleaves cruciform DNA by making single-stranded nicks across the HJ at symmetrical positions within the homologous arms, yielding a 5'-phosphate and a 3'-hydroxyl group; requires a central core of homology in the junction. The consensus cleavage sequence is 5'-(A/T)TT(C/G)-3'. Cleavage occurs on the 3'-side of the TT dinucleotide at the point of strand exchange. HJ branch migration catalyzed by RuvA-RuvB allows RuvC to scan DNA until it finds its consensus sequence, where it cleaves and resolves the cruciform DNA. The protein is Crossover junction endodeoxyribonuclease RuvC of Methylobacillus flagellatus (strain ATCC 51484 / DSM 6875 / VKM B-1610 / KT).